We begin with the raw amino-acid sequence, 276 residues long: Large ribosomal subunit protein uL2c (276 aa).

The disordered stretch occupies residues 225-276 (AMNPVDHPHGGGEGRTPIGRKKPVTPWGYSALGKKSRKRNRYSDASILRRRE).

This sequence belongs to the universal ribosomal protein uL2 family. As to quaternary structure, part of the 50S ribosomal subunit.

It is found in the plastid. It localises to the chloroplast. The protein is Large ribosomal subunit protein uL2c (rpl2) of Pinus thunbergii (Japanese black pine).